The chain runs to 133 residues: p53 and DNA damage-regulated protein 1 (133 aa).

The protein belongs to the prefoldin subunit beta family. As to quaternary structure, component of the PAQosome complex which is responsible for the biogenesis of several protein complexes and which consists of R2TP complex members RUVBL1, RUVBL2, RPAP3 and PIH1D1, URI complex members PFDN2, PFDN6, PDRG1, UXT and URI1 as well as ASDURF, POLR2E and DNAAF10/WDR92.

The protein resides in the cytoplasm. In terms of biological role, may play a role in chaperone-mediated protein folding. In Pongo abelii (Sumatran orangutan), this protein is p53 and DNA damage-regulated protein 1 (PDRG1).